We begin with the raw amino-acid sequence, 293 residues long: Movement protein BC1 (293 aa).

Residues 207-228 (SWASRSTIGPSPSYAGSDQGDA) are disordered. Over residues 209 to 222 (ASRSTIGPSPSYAG) the composition is skewed to polar residues.

Belongs to the begomovirus movement protein BC1 family. As to quaternary structure, binds to dimeric supercoiled plasmid DNA. Phosphorylated.

It localises to the host cell membrane. It is found in the host microsome membrane. The protein resides in the host endoplasmic reticulum membrane. In terms of biological role, movement protein involved in the cell-to-cell and systemic transport of viral genomic DNA. Begomoviruses use 2 proteins to transport their DNA from cell to cell. The nuclear shuttle protein (NSP) shuttles it between nucleus and cytoplasm and the movement protein (MP) probably transports the DNA-NSP complex to the cell periphery and facilitates further movement across the cell wall. The chain is Movement protein BC1 from Tomato golden mosaic virus (strain Yellow vein) (TGMV).